Here is a 100-residue protein sequence, read N- to C-terminus: Urease subunit gamma (100 aa).

This sequence belongs to the urease gamma subunit family. In terms of assembly, heterotrimer of UreA (gamma), UreB (beta) and UreC (alpha) subunits. Three heterotrimers associate to form the active enzyme.

It localises to the cytoplasm. It carries out the reaction urea + 2 H2O + H(+) = hydrogencarbonate + 2 NH4(+). It participates in nitrogen metabolism; urea degradation; CO(2) and NH(3) from urea (urease route): step 1/1. The protein is Urease subunit gamma of Magnetococcus marinus (strain ATCC BAA-1437 / JCM 17883 / MC-1).